The chain runs to 360 residues: MLVYLAEYLTQFYSGFNVFSYVTFRAILGLMTALMFSLWWGPKMIERLQLLQIGQVVRNDGPESHFSKRGTPTMGGLLILAGIFISVLLWGDLGSRYVWVVLFVLASFGTIGFIDDYRKVVRKDTKGLIARWKYLLQSIAAIVIAVYLYASADTAGETQLVVPFFKDVMPQLGAFFIVLVYFTIVGSSNAVNLTDGLDGLAIMPTVMVAAAFALIAYLSGHVQFANYLHIPYLPGAGELVIVCTAIVGAGLGFLWFNTYPAQVFMGDVGSLALGAALGAIAVLVRQEILLVIMGGVFVMETVSVILQVGSYKLRGQRIFRMAPIHHHYELKGWPEPRVIVRFWIISLFLVLLGLATLKLR.

The next 10 helical transmembrane spans lie at Tyr21–Gly41, Met74–Gly94, Tyr97–Tyr117, Leu135–Ala155, Val168–Ser188, Gly199–Ser219, Ala236–Phe256, Val263–Leu283, Ile288–Val308, and Val338–Lys358.

The protein belongs to the glycosyltransferase 4 family. MraY subfamily. Mg(2+) serves as cofactor.

It localises to the cell inner membrane. It carries out the reaction UDP-N-acetyl-alpha-D-muramoyl-L-alanyl-gamma-D-glutamyl-meso-2,6-diaminopimeloyl-D-alanyl-D-alanine + di-trans,octa-cis-undecaprenyl phosphate = di-trans,octa-cis-undecaprenyl diphospho-N-acetyl-alpha-D-muramoyl-L-alanyl-D-glutamyl-meso-2,6-diaminopimeloyl-D-alanyl-D-alanine + UMP. It participates in cell wall biogenesis; peptidoglycan biosynthesis. Functionally, catalyzes the initial step of the lipid cycle reactions in the biosynthesis of the cell wall peptidoglycan: transfers peptidoglycan precursor phospho-MurNAc-pentapeptide from UDP-MurNAc-pentapeptide onto the lipid carrier undecaprenyl phosphate, yielding undecaprenyl-pyrophosphoryl-MurNAc-pentapeptide, known as lipid I. This is Phospho-N-acetylmuramoyl-pentapeptide-transferase from Shewanella piezotolerans (strain WP3 / JCM 13877).